Reading from the N-terminus, the 311-residue chain is Putative S-adenosyl-L-methionine-dependent methyltransferase MRA_0152 (311 aa).

Residues Asp135 and 164 to 165 (DL) contribute to the S-adenosyl-L-methionine site.

Belongs to the UPF0677 family.

Functionally, exhibits S-adenosyl-L-methionine-dependent methyltransferase activity. This is Putative S-adenosyl-L-methionine-dependent methyltransferase MRA_0152 from Mycobacterium tuberculosis (strain ATCC 25177 / H37Ra).